A 205-amino-acid polypeptide reads, in one-letter code: Small ribosomal subunit protein uS4 (205 aa).

Residues 19–45 form a disordered region; sequence IWGRPKSPVNRREYGPGQHGQRRKGKL. Residues 94–157 form the S4 RNA-binding domain; that stretch reads SRLDAVVYRA…KQLAIVLEAV (64 aa).

The protein belongs to the universal ribosomal protein uS4 family. Part of the 30S ribosomal subunit. Contacts protein S5. The interaction surface between S4 and S5 is involved in control of translational fidelity.

Functionally, one of the primary rRNA binding proteins, it binds directly to 16S rRNA where it nucleates assembly of the body of the 30S subunit. In terms of biological role, with S5 and S12 plays an important role in translational accuracy. The chain is Small ribosomal subunit protein uS4 from Brucella melitensis biotype 2 (strain ATCC 23457).